Consider the following 203-residue polypeptide: FMN-dependent NADH:quinone oxidoreductase (203 aa).

FMN is bound by residues Ser-9, 15-17 (SVS), and 138-141 (SRGG).

Belongs to the azoreductase type 1 family. Homodimer. It depends on FMN as a cofactor.

The enzyme catalyses 2 a quinone + NADH + H(+) = 2 a 1,4-benzosemiquinone + NAD(+). It carries out the reaction N,N-dimethyl-1,4-phenylenediamine + anthranilate + 2 NAD(+) = 2-(4-dimethylaminophenyl)diazenylbenzoate + 2 NADH + 2 H(+). Functionally, quinone reductase that provides resistance to thiol-specific stress caused by electrophilic quinones. Its function is as follows. Also exhibits azoreductase activity. Catalyzes the reductive cleavage of the azo bond in aromatic azo compounds to the corresponding amines. This is FMN-dependent NADH:quinone oxidoreductase from Methylorubrum extorquens (strain CM4 / NCIMB 13688) (Methylobacterium extorquens).